The following is a 351-amino-acid chain: Photosystem II D2 protein (351 aa).

A helical transmembrane segment spans residues Cys39 to Thr59. A chlorophyll a-binding site is contributed by His116. Residues Gly123–Pro139 traverse the membrane as a helical segment. 2 residues coordinate pheophytin a: Gln128 and Asn141. A helical transmembrane segment spans residues Val151 to Ala164. His196 serves as a coordination point for chlorophyll a. Residues Gly206 to Asp226 traverse the membrane as a helical segment. The a plastoquinone site is built by His213 and Phe260. His213 is a binding site for Fe cation. His267 is a binding site for Fe cation. Residues Gly277–Arg293 form a helical membrane-spanning segment.

The protein belongs to the reaction center PufL/M/PsbA/D family. In terms of assembly, PSII is composed of 1 copy each of membrane proteins PsbA, PsbB, PsbC, PsbD, PsbE, PsbF, PsbH, PsbI, PsbJ, PsbK, PsbL, PsbM, PsbT, PsbX, PsbY, PsbZ, Psb30/Ycf12, at least 3 peripheral proteins of the oxygen-evolving complex and a large number of cofactors. It forms dimeric complexes. The D1/D2 heterodimer binds P680, chlorophylls that are the primary electron donor of PSII, and subsequent electron acceptors. It shares a non-heme iron and each subunit binds pheophytin, quinone, additional chlorophylls, carotenoids and lipids. There is also a Cl(-1) ion associated with D1 and D2, which is required for oxygen evolution. The PSII complex binds additional chlorophylls, carotenoids and specific lipids. is required as a cofactor.

The protein resides in the plastid. Its subcellular location is the chloroplast thylakoid membrane. The catalysed reaction is 2 a plastoquinone + 4 hnu + 2 H2O = 2 a plastoquinol + O2. Photosystem II (PSII) is a light-driven water:plastoquinone oxidoreductase that uses light energy to abstract electrons from H(2)O, generating O(2) and a proton gradient subsequently used for ATP formation. It consists of a core antenna complex that captures photons, and an electron transfer chain that converts photonic excitation into a charge separation. The D1/D2 (PsbA/PsbD) reaction center heterodimer binds P680, the primary electron donor of PSII as well as several subsequent electron acceptors. D2 is needed for assembly of a stable PSII complex. In Pyropia yezoensis (Susabi-nori), this protein is Photosystem II D2 protein.